The primary structure comprises 1258 residues: Phospholipid-transporting ATPase C887.12 (1258 aa).

Disordered stretches follow at residues 1–41 and 53–83; these read MARD…LGED and YISSSGQNSTNPFLADTRIENSPLGSESKAN. Topologically, residues 1–183 are cytoplasmic; sequence MARDVDNKQN…PKFLKEQFSK (183 aa). Over residues 53 to 64 the composition is skewed to polar residues; the sequence is YISSSGQNSTNP. The helical transmembrane segment at 184-204 threads the bilayer; sequence YANLFFLFTAVVQQIPGITPV. The Lumenal portion of the chain corresponds to 205-208; it reads NRYT. The helical transmembrane segment at 209–229 threads the bilayer; that stretch reads TIGPMLIVLSVSGIKEIMEDI. Residues 230–406 are Cytoplasmic-facing; sequence KRKKQDQELN…TSVEKQVNSQ (177 aa). A helical membrane pass occupies residues 407–427; that stretch reads ILFLLCIFVFLCFASSLGALI. The Lumenal segment spans residues 428–451; that stretch reads HRSVYGSALSYVKYTSNRAGMFFK. Residues 452 to 472 form a helical membrane-spanning segment; it reads GLLTFWILYSNLVPISLFVTF. The Cytoplasmic segment spans residues 473-974; it reads ELVRYIQAQL…KLILYSFYKN (502 aa). Aspartate 518 serves as the catalytic 4-aspartylphosphate intermediate. Residues aspartate 518, lysine 519, threonine 520, glutamate 613, phenylalanine 654, serine 656, lysine 659, lysine 677, arginine 710, threonine 711, threonine 790, glycine 791, aspartate 792, arginine 883, and lysine 889 each contribute to the ATP site. Aspartate 518 serves as a coordination point for Mg(2+). Mg(2+) is bound at residue threonine 520. Aspartate 909 lines the Mg(2+) pocket. ATP is bound by residues asparagine 912 and aspartate 913. Residue aspartate 913 coordinates Mg(2+). The chain crosses the membrane as a helical span at residues 975–995; sequence IALYMTQFWYAFCNAFSGQVI. The Lumenal segment spans residues 996–998; it reads FES. Residues 999 to 1019 traverse the membrane as a helical segment; sequence WSISLYNVLFTVLPPVVIGIF. Over 1020–1051 the chain is Cytoplasmic; that stretch reads DQFVSAGQLFQYPQLYQLGQRSEFFNLKRFWS. A helical transmembrane segment spans residues 1052–1072; that stretch reads WITNGFYHSLLLFLCSIAVFY. Topologically, residues 1073-1086 are lumenal; the sequence is YDGPNKDGLASGHW. Residues 1087-1107 traverse the membrane as a helical segment; it reads VWGTTLYAAILATVLGKAALI. Residue lysine 1103 participates in a 1,2-diacyl-sn-glycero-3-phospho-(1D-myo-inositol 4-phosphate) binding. The Cytoplasmic portion of the chain corresponds to 1108 to 1115; the sequence is SNHWTQYT. The helical transmembrane segment at 1116–1136 threads the bilayer; the sequence is VIATLGSFLLWIVFMPIYAVA. Topologically, residues 1137–1148 are lumenal; it reads APAIGFSKEYYG. A helical transmembrane segment spans residues 1149-1169; it reads IIPHLYGNLKFWASLLVLPTI. Topologically, residues 1170 to 1258 are cytoplasmic; that stretch reads ALMRDFVWKY…HTRGAYGEMR (89 aa). Residues arginine 1173, tryptophan 1177, lysine 1178, tyrosine 1189, and histidine 1190 each coordinate a 1,2-diacyl-sn-glycero-3-phospho-(1D-myo-inositol 4-phosphate).

Belongs to the cation transport ATPase (P-type) (TC 3.A.3) family. Type IV subfamily. It depends on Mg(2+) as a cofactor.

The protein localises to the endoplasmic reticulum membrane. The protein resides in the golgi apparatus. It is found in the trans-Golgi network membrane. The enzyme catalyses ATP + H2O + phospholipidSide 1 = ADP + phosphate + phospholipidSide 2.. It carries out the reaction a 1,2-diacyl-sn-glycero-3-phospho-L-serine(out) + ATP + H2O = a 1,2-diacyl-sn-glycero-3-phospho-L-serine(in) + ADP + phosphate + H(+). It catalyses the reaction a 1,2-diacyl-sn-glycero-3-phosphoethanolamine(out) + ATP + H2O = a 1,2-diacyl-sn-glycero-3-phosphoethanolamine(in) + ADP + phosphate + H(+). In terms of biological role, catalytic component of a P4-ATPase flippase complex which catalyzes the hydrolysis of ATP coupled to the transport of phosphatidylserine and small amounts of ethanolamine from the lumen to the cytosolic leaflet of the trans-Golgi network and ensures the maintenance of asymmetric distribution of phospholipids. The protein is Phospholipid-transporting ATPase C887.12 of Schizosaccharomyces pombe (strain 972 / ATCC 24843) (Fission yeast).